The sequence spans 272 residues: EID1-like F-box protein 3 (272 aa).

The 53-residue stretch at 29–81 folds into the F-box domain; sequence SGKSGIENERVLVLVFESISWDIHTLCTIASLSRRFCAIARRILWRRLCVNRA.

The sequence is that of EID1-like F-box protein 3 (EDL3) from Arabidopsis thaliana (Mouse-ear cress).